A 382-amino-acid polypeptide reads, in one-letter code: MVVPSATTPARQETVVAAAPPAAAASGVVGGGGGVTIATVDMSAERGAVARQVATACAAHGFFRCVGHGVPAAAPVAARLDAATAAFFAMAPAEKQRAGPASPLGYGCRSIGFNGDVGELEYLLLHANPAAVAHRARTIDAMDPSRFSAIVNEYIEAMKKLACEILDLLGEGLGLKDPRYFSKLTTNADSDCLLRINHYPPSCNIHKLDHDDQCNIKSLVSTKASNGGNLMAGGRIGFGEHSDPQILSLLRANDVEGLQVFVPDHEGKEMWVQVPSDPSAIFVNVGDVLQALTNGRLISIRHRVIATACRPRLSTIYFASPPLHARISALPETITASSPRRYRSFTWAEYKTTMYSLRLSHSRLELFKIDDDDSDNASEGKA.

The Fe2OG dioxygenase domain maps to 189–321 (DSDCLLRINH…RLSTIYFASP (133 aa)). Tyr-199 provides a ligand contact to 2-oxoglutarate. Residues His-241, Asp-243, and His-302 each coordinate Fe cation. Arg-312 and Ser-314 together coordinate 2-oxoglutarate.

It belongs to the iron/ascorbate-dependent oxidoreductase family. GA2OX subfamily. L-ascorbate serves as cofactor. The cofactor is Fe(2+). As to expression, expressed in roots, shoot apex, and in the basal region of leaf primordia and young leaves.

It carries out the reaction gibberellin A1 + 2-oxoglutarate + O2 = gibberellin A8 + succinate + CO2. In terms of biological role, catalyzes the 2-beta-hydroxylation of several biologically active gibberellins, leading to the homeostatic regulation of their endogenous level. Catabolism of gibberellins (GAs) plays a central role in plant development. Controls the level of bioactive GAs in the shoot apical meristem, which regulates the vegetative to reproductive phase transition. In vitro, converts GA1, GA4, GA9, GA20, and GA44 to the corresponding 2-beta-hydroxylated products GA8, GA34, GA51, GA29, and GA98, respectively. The chain is Gibberellin 2-beta-dioxygenase 1 from Oryza sativa subsp. japonica (Rice).